A 93-amino-acid polypeptide reads, in one-letter code: Cytochrome c (93 aa).

Residues 1–13 (AALPPGDAAAAQG) are compositionally biased toward low complexity. Residues 1–21 (AALPPGDAAAAQGGSNGVGPN) are disordered. Met70 contributes to the heme c binding site.

The protein belongs to the cytochrome c family. In terms of processing, binds 1 heme c group covalently per subunit.

The protein resides in the mitochondrion intermembrane space. Its function is as follows. Electron carrier protein. The oxidized form of the cytochrome c heme group can accept an electron from the heme group of the cytochrome c1 subunit of cytochrome reductase. Cytochrome c then transfers this electron to the cytochrome oxidase complex, the final protein carrier in the mitochondrial electron-transport chain. The polypeptide is Cytochrome c (Trypanosoma brucei brucei).